Reading from the N-terminus, the 300-residue chain is UDP-N-acetylenolpyruvoylglucosamine reductase (300 aa).

The 165-residue stretch at 29–193 folds into the FAD-binding PCMH-type domain; the sequence is TGGPADLLVF…LSATFKLRSG (165 aa). Arg172 is a catalytic residue. Ser222 (proton donor) is an active-site residue. The active site involves Glu292.

The protein belongs to the MurB family. FAD is required as a cofactor.

It is found in the cytoplasm. It carries out the reaction UDP-N-acetyl-alpha-D-muramate + NADP(+) = UDP-N-acetyl-3-O-(1-carboxyvinyl)-alpha-D-glucosamine + NADPH + H(+). Its pathway is cell wall biogenesis; peptidoglycan biosynthesis. In terms of biological role, cell wall formation. The sequence is that of UDP-N-acetylenolpyruvoylglucosamine reductase from Pediococcus pentosaceus (strain ATCC 25745 / CCUG 21536 / LMG 10740 / 183-1w).